The primary structure comprises 378 residues: Cytochrome b (378 aa).

Helical transmembrane passes span 34–54 (FGSLLGLCLIIQILTGLFLAM), 78–99 (WLLRTLHANGASFFFICIYLHV), 114–134 (WLIGVIILFLVMGTAFMGYVL), and 179–199 (FFTFHFILPFIVLAMTMIHLL). Positions 84 and 98 each coordinate heme b. The heme b site is built by histidine 183 and histidine 197. Histidine 202 lines the a ubiquinone pocket. A run of 4 helical transmembrane segments spans residues 227–247 (FKDIVGFIVMIFILISLVLIS), 289–309 (LGGVIALVLSIAILMILPFYN), 321–341 (INQVMFWSMLVTVILLTWIGA), and 348–368 (YVLIGQILTVVYFLYYLVNPL).

It belongs to the cytochrome b family. The main subunits of complex b-c1 are: cytochrome b, cytochrome c1 and the Rieske protein. Requires heme b as cofactor.

The protein resides in the mitochondrion inner membrane. In terms of biological role, component of the ubiquinol-cytochrome c reductase complex (complex III or cytochrome b-c1 complex) that is part of the mitochondrial respiratory chain. The b-c1 complex mediates electron transfer from ubiquinol to cytochrome c. Contributes to the generation of a proton gradient across the mitochondrial membrane that is then used for ATP synthesis. The protein is Cytochrome b (mt:Cyt-b) of Drosophila simulans (Fruit fly).